Here is a 596-residue protein sequence, read N- to C-terminus: MTSPSPRIQIISTDSAVRSPQRIQIVTDQQTGQKLQIVTAVDASGSSKQQFILTSPDGAGTGKVILASPETSSAKQLIFTTSDNLVPGRIQIVTDSASVERLLGKADVQRPQVVEYCVVCGDKASGRHYGAVSCEGCKGFFKRSVRKNLTYSCRSSQDCIINKHHRNRCQFCRLKKCLEMGMKMESVQSERKPFDVQREKPSNCAASTEKIYIRKDLRSPLIATPTFVADKDGSRQTGLLDPGMLVNIQQPLIREDGTVLLATDSKAETSQGALGTLANVVTSLANLSESLNNGDASEMQPEDQSASEITRAFDTLAKALNTTDSASPPSLADGIDASGGGSIHVISRDQSTPIIEVEGPLLSDTHVTFKLTMPSPMPEYLNVHYICESASRLLFLSMHWARSIPAFQALGQDCNTSLVRACWNELFTLGLAQCAQVMSLSTILAAIVNHLQNSIQEDKLSGDRIKQVMEHIWKLQEFCNSMAKLDIDGHEYAYLKAIVLFSPDHPGLTGTSQIEKFQEKAQMELQDYVQKTYSEDTYRLARILVRLPALRLMSSNITEELFFTGLIGNVSIDSIIPYILKMETAEYNGQITGASL.

Phosphoserine; by MAPK is present on Ser-19. Ser-46 bears the Phosphoserine mark. A phosphoserine; by MAPK mark is found at Ser-55 and Ser-68. Phosphoserine is present on Ser-98. Positions 114-189 (VEYCVVCGDK…MGMKMESVQS (76 aa)) form a DNA-binding region, nuclear receptor. NR C4-type zinc fingers lie at residues 117–137 (CVVC…CEGC) and 153–177 (CRSS…LKKC). Lys-192 is covalently cross-linked (Glycyl lysine isopeptide (Lys-Gly) (interchain with G-Cter in SUMO2)). Phosphoserine is present on Ser-219. Lys-231 bears the N6-acetyllysine mark. One can recognise an NR LBD domain in the interval 341–583 (GSIHVISRDQ…SIIPYILKME (243 aa)).

It belongs to the nuclear hormone receptor family. NR2 subfamily. In terms of assembly, homodimer; can bind DNA as homodimer. Heterodimer; binds DNA as a heterodimer with NR2C1 required for chromatin remodeling and for binding to promoter regions such as globin DR1 repeats. Interacts with NR2C2AP; the interaction represses selective NR2C2-mediated transcriptional activity. Interacts with PCAF; the interaction preferentially occurs on the non-phosphorylated form and induces NR2C2-mediated transactivation activity and does not require the ligand-binding domain. Interacts (MAPK-mediated phosphorylated form) with NRIP1; the interaction promotes repression of NR2C2-mediated activity. Interacts with NLRP10. Interacts (via ligand-binding region) with transcriptional corepressor JAZF1; the interaction promotes NR2C2-mediated transcriptional repression. Post-translationally, phosphorylation on Ser-19 and Ser-68 is an important regulator of NR2C2-mediated transcriptional activity. Phosphorylation on these residues recruits the corepressor, NRIP1, leading to transcripional repression, whereas the non-phosphorylated form preferentially recruits the coactivator, PCAF. In terms of tissue distribution, expressed in hepatocytes. Also expressed in granule cells of the hippocampus and the cerebellum.

The protein localises to the nucleus. Functionally, orphan nuclear receptor that can act as a repressor or activator of transcription. An important repressor of nuclear receptor signaling pathways such as retinoic acid receptor, retinoid X, vitamin D3 receptor, thyroid hormone receptor and estrogen receptor pathways. May regulate gene expression during the late phase of spermatogenesis. Activates transcriptional activity of LHCG and is antagonist of PPARA-mediated transactivation. Together with NR2C1, forms the core of the DRED (direct repeat erythroid-definitive) complex that represses embryonic and fetal globin transcription including that of GATA1. Binds to hormone response elements (HREs) consisting of two 5'-AGGTCA-3' half site direct repeat consensus sequences. Plays a fundamental role in early embryonic development and embryonic stem cells. Required for normal spermatogenesis and cerebellum development. Appears to be important for neurodevelopmentally regulated behavior. The polypeptide is Nuclear receptor subfamily 2 group C member 2 (Nr2c2) (Rattus norvegicus (Rat)).